Reading from the N-terminus, the 150-residue chain is 3-dehydroquinate dehydratase (150 aa).

Tyrosine 26 (proton acceptor) is an active-site residue. The substrate site is built by asparagine 77, histidine 83, and aspartate 90. Catalysis depends on histidine 103, which acts as the Proton donor. Substrate-binding positions include 104–105 (LS) and arginine 114.

Belongs to the type-II 3-dehydroquinase family. Homododecamer.

It catalyses the reaction 3-dehydroquinate = 3-dehydroshikimate + H2O. It participates in metabolic intermediate biosynthesis; chorismate biosynthesis; chorismate from D-erythrose 4-phosphate and phosphoenolpyruvate: step 3/7. Functionally, catalyzes a trans-dehydration via an enolate intermediate. The polypeptide is 3-dehydroquinate dehydratase (Citrobacter koseri (strain ATCC BAA-895 / CDC 4225-83 / SGSC4696)).